The sequence spans 125 residues: Histone H2A (125 aa).

The span at 1 to 18 (MSGRGKGGKAKGKSKSRS) shows a compositional bias: basic residues. The segment at 1–23 (MSGRGKGGKAKGKSKSRSSRAGL) is disordered. The residue at position 2 (Ser2) is an N-acetylserine. At Ser2 the chain carries Phosphoserine. Gln104 is subject to N5-methylglutamine.

This sequence belongs to the histone H2A family. In terms of assembly, the nucleosome is a histone octamer containing two molecules each of H2A, H2B, H3 and H4 assembled in one H3-H4 heterotetramer and two H2A-H2B heterodimers. The octamer wraps approximately 147 bp of DNA.

It is found in the nucleus. Its subcellular location is the chromosome. Core component of nucleosome. Nucleosomes wrap and compact DNA into chromatin, limiting DNA accessibility to the cellular machineries which require DNA as a template. Histones thereby play a central role in transcription regulation, DNA repair, DNA replication and chromosomal stability. DNA accessibility is regulated via a complex set of post-translational modifications of histones, also called histone code, and nucleosome remodeling. The sequence is that of Histone H2A from Urechis caupo (Innkeeper worm).